Reading from the N-terminus, the 132-residue chain is Fumarate reductase subunit C (132 aa).

A run of 3 helical transmembrane segments spans residues 36-56, 70-90, and 110-130; these read AIPT…LGSL, IVII…VTYY, and IITM…LVFM.

This sequence belongs to the FrdC family. Part of an enzyme complex containing four subunits: a flavoprotein (FrdA), an iron-sulfur protein (FrdB), and two hydrophobic anchor proteins (FrdC and FrdD).

The protein localises to the cell inner membrane. In terms of biological role, anchors the catalytic components of the fumarate reductase complex to the cell membrane, binds quinones. This chain is Fumarate reductase subunit C, found in Pasteurella multocida (strain Pm70).